Here is a 474-residue protein sequence, read N- to C-terminus: Type I restriction enzyme EcoBI specificity subunit (474 aa).

The protein belongs to the type-I restriction system S methylase family. In terms of assembly, the type I restriction/modification system is composed of three polypeptides R, M and S. The restriction enzyme has stoichiometry R(2)M(2)S(1) while the methyltransferase is M(2)S(1).

Its function is as follows. The specificity (S) subunit of a type I restriction enzyme; this subunit dictates DNA sequence specificity. The M and S subunits together form a methyltransferase (MTase) that methylates A-3 on the top strand and A-4 on the bottom strand of the sequence 5'-TGAN(8)TGCT-3'. In the presence of the R subunit the complex can also act as an endonuclease, binding to the same target sequence but cutting the DNA some distance from this site. Whether the DNA is cut or modified depends on the methylation state of the target sequence. When the target site is unmodified, the DNA is cut. When the target site is hemimethylated, the complex acts as a maintenance MTase modifying the DNA so that both strands become methylated. After locating a non-methylated recognition site, the enzyme complex serves as a molecular motor that translocates DNA in an ATP-dependent manner until a collision occurs that triggers cleavage. This chain is Type I restriction enzyme EcoBI specificity subunit, found in Escherichia coli.